A 638-amino-acid chain; its full sequence is 1-deoxy-D-xylulose-5-phosphate synthase (638 aa).

Thiamine diphosphate is bound by residues His79 and 120-122; that span reads GHS. Position 151 (Asp151) interacts with Mg(2+). Residues 152–153, Asn182, Tyr291, and Glu373 contribute to the thiamine diphosphate site; that span reads GA. Asn182 contacts Mg(2+).

The protein belongs to the transketolase family. DXPS subfamily. In terms of assembly, homodimer. The cofactor is Mg(2+). Thiamine diphosphate is required as a cofactor.

The enzyme catalyses D-glyceraldehyde 3-phosphate + pyruvate + H(+) = 1-deoxy-D-xylulose 5-phosphate + CO2. The protein operates within metabolic intermediate biosynthesis; 1-deoxy-D-xylulose 5-phosphate biosynthesis; 1-deoxy-D-xylulose 5-phosphate from D-glyceraldehyde 3-phosphate and pyruvate: step 1/1. Functionally, catalyzes the acyloin condensation reaction between C atoms 2 and 3 of pyruvate and glyceraldehyde 3-phosphate to yield 1-deoxy-D-xylulose-5-phosphate (DXP). This is 1-deoxy-D-xylulose-5-phosphate synthase from Xanthomonas oryzae pv. oryzae (strain MAFF 311018).